Reading from the N-terminus, the 250-residue chain is Menaquinol:cytochrome c reductase cytochrome c subunit (250 aa).

3 helical membrane-spanning segments follow: residues 46–62 (WLVGSVFLVGFLCLTVA), 104–124 (VIGAIVMPGLAFGALLLAPFL), and 137–157 (VATGMMLLTLAAIVYLTWESV). The 73-residue stretch at 178 to 250 (DTNAEGYKIA…LQKMANSSPA (73 aa)) folds into the Cytochrome c domain. Heme c-binding residues include cysteine 192, cysteine 195, and histidine 196. The segment at 229–250 (MPGGIFKGTDEELQKMANSSPA) is disordered.

The protein belongs to the cytochrome b family. As to quaternary structure, the main subunits of the menaquinol:cytochrome c complex are a Rieske-type iron-sulfur protein (QcrA), a cytochrome b (QcrB) and a cytochrome c (QcrC). Heme c is required as a cofactor.

Its subcellular location is the cell membrane. Component of the menaquinol:cytochrome c reductase complex. This Geobacillus thermodenitrificans protein is Menaquinol:cytochrome c reductase cytochrome c subunit (qcrC).